Here is a 244-residue protein sequence, read N- to C-terminus: Large ribosomal subunit protein uL2 (244 aa).

The span at 1–12 (MGKRILVQRRGR) shows a compositional bias: basic residues. Disordered stretches follow at residues 1 to 26 (MGKR…KRDG) and 193 to 225 (AMSP…KVGF).

Belongs to the universal ribosomal protein uL2 family. In terms of assembly, part of the 50S ribosomal subunit. Forms a bridge to the 30S subunit in the 70S ribosome.

Its function is as follows. One of the primary rRNA binding proteins. Required for association of the 30S and 50S subunits to form the 70S ribosome, for tRNA binding and peptide bond formation. It has been suggested to have peptidyltransferase activity; this is somewhat controversial. Makes several contacts with the 16S rRNA in the 70S ribosome. The sequence is that of Large ribosomal subunit protein uL2 from Pyrobaculum calidifontis (strain DSM 21063 / JCM 11548 / VA1).